Consider the following 89-residue polypeptide: Putative regulatory protein BPUM_1466 (89 aa).

This sequence belongs to the RemA family.

The chain is Putative regulatory protein BPUM_1466 from Bacillus pumilus (strain SAFR-032).